The following is a 229-amino-acid chain: MASSNFFLPTALIALVATQAMAFDPSPLQDFCVADRNSPVRVNGFPCKDAKDVNVDDFFLEANLDKPMDTTKSKAGSNVTLINVMKLTGLNTLGISMARIDYAPKGQNPPHTHPRATEILTVFEGTLYVGFVTSNQANGENKLFTKTLNKGDVFVFPQGLIHFQFNPSYDKPAVAIAALSSQNPGAITIANAVFGSNPPISDDVLAKAFQVDKKAVDWLQAQFWENNHN.

Residues 1–22 (MASSNFFLPTALIALVATQAMA) form the signal peptide. A disulfide bond links C32 and C47. The Cupin type-1 domain occupies 62–217 (ANLDKPMDTT…AFQVDKKAVD (156 aa)). The N-linked (GlcNAc...) asparagine glycan is linked to N78. Mn(2+) is bound by residues H111, H113, E118, and H162.

This sequence belongs to the germin family. Oligomer (believed to be a pentamer but probably hexamer).

It localises to the secreted. Its subcellular location is the extracellular space. It is found in the apoplast. Its function is as follows. May play a role in plant defense. Probably has no oxalate oxidase activity even if the active site is conserved. In Oryza sativa subsp. japonica (Rice), this protein is Germin-like protein 12-1.